Consider the following 238-residue polypeptide: Ribonuclease 3 (238 aa).

One can recognise an RNase III domain in the interval 9-141 (LIDFMEKIGY…VVAAVYIDGG (133 aa)). A Mg(2+)-binding site is contributed by glutamate 54. The active site involves aspartate 58. Mg(2+) contacts are provided by aspartate 127 and glutamate 130. Glutamate 130 is a catalytic residue. A DRBM domain is found at 168–237 (DYKTSLQEIT…ARRAIEKLKG (70 aa)).

It belongs to the ribonuclease III family. In terms of assembly, homodimer. It depends on Mg(2+) as a cofactor.

Its subcellular location is the cytoplasm. It catalyses the reaction Endonucleolytic cleavage to 5'-phosphomonoester.. Functionally, digests double-stranded RNA. Involved in the processing of primary rRNA transcript to yield the immediate precursors to the large and small rRNAs (23S and 16S). Processes some mRNAs, and tRNAs when they are encoded in the rRNA operon. Processes pre-crRNA and tracrRNA of type II CRISPR loci if present in the organism. The chain is Ribonuclease 3 from Pseudothermotoga lettingae (strain ATCC BAA-301 / DSM 14385 / NBRC 107922 / TMO) (Thermotoga lettingae).